Here is a 465-residue protein sequence, read N- to C-terminus: UDP-N-acetylmuramate--L-alanine ligase (465 aa).

Gly115–Thr121 contributes to the ATP binding site.

This sequence belongs to the MurCDEF family.

The protein resides in the cytoplasm. It catalyses the reaction UDP-N-acetyl-alpha-D-muramate + L-alanine + ATP = UDP-N-acetyl-alpha-D-muramoyl-L-alanine + ADP + phosphate + H(+). It functions in the pathway cell wall biogenesis; peptidoglycan biosynthesis. Functionally, cell wall formation. In Coxiella burnetii (strain Dugway 5J108-111), this protein is UDP-N-acetylmuramate--L-alanine ligase.